A 208-amino-acid chain; its full sequence is MKIVEVKHPLIQHKLGLMRDHDISTKRFRELASEVSSLLTYEATADLETETVTIEGWCGPVEIEQIKGKKITVVPILRAGLGMMDGVLENIPSARISVVGVYRDEETLKPVPYFQKLASHIEERMALVVDPMLATGGSMIATIDLLKNSGCTSIKVLVLVAAPEGIKALEEAHPDVELYTASIDKHLNEHGYIVPGLGDAGDKIFGTK.

5-phospho-alpha-D-ribose 1-diphosphate-binding positions include R78, R103, and 130-138 (DPMLATGGS). Uracil-binding positions include I193 and 198–200 (GDA). A 5-phospho-alpha-D-ribose 1-diphosphate-binding site is contributed by D199.

The protein belongs to the UPRTase family. Mg(2+) is required as a cofactor.

It carries out the reaction UMP + diphosphate = 5-phospho-alpha-D-ribose 1-diphosphate + uracil. It participates in pyrimidine metabolism; UMP biosynthesis via salvage pathway; UMP from uracil: step 1/1. Allosterically activated by GTP. Its function is as follows. Catalyzes the conversion of uracil and 5-phospho-alpha-D-ribose 1-diphosphate (PRPP) to UMP and diphosphate. In Proteus mirabilis (strain HI4320), this protein is Uracil phosphoribosyltransferase.